Consider the following 604-residue polypeptide: NADH-ubiquinone oxidoreductase chain 5 (604 aa).

16 helical membrane passes run 2-22 (FSSL…LSIF), 41-61 (AFIT…ETII), 85-105 (MIFV…SLWY), 115-135 (FFKY…ANNL), 138-158 (LFIG…WWYG), 169-189 (AILY…WFLF), 209-231 (LPLL…HPWL), 239-259 (TPVS…FLLI), 271-291 (IQSL…ICAL), 299-318 (IIAF…IGIN), 323-345 (AFLH…GSII), 364-384 (MPFT…IPFL), 411-431 (LIAT…ALLG), 455-475 (LLIG…PTTV), 486-506 (LTAL…SLMT), and 582-602 (IKLY…LFNL).

The protein belongs to the complex I subunit 5 family. In terms of assembly, core subunit of respiratory chain NADH dehydrogenase (Complex I) which is composed of 45 different subunits.

It is found in the mitochondrion inner membrane. The catalysed reaction is a ubiquinone + NADH + 5 H(+)(in) = a ubiquinol + NAD(+) + 4 H(+)(out). Its function is as follows. Core subunit of the mitochondrial membrane respiratory chain NADH dehydrogenase (Complex I) which catalyzes electron transfer from NADH through the respiratory chain, using ubiquinone as an electron acceptor. Essential for the catalytic activity and assembly of complex I. In Equus caballus (Horse), this protein is NADH-ubiquinone oxidoreductase chain 5 (MT-ND5).